Consider the following 248-residue polypeptide: Probable aquaporin TIP2-2 (248 aa).

The next 2 helical transmembrane spans lie at 21–41 (AYVAEFISTLVFVFAGVGSAI) and 55–75 (AGLVAVAVCHGFGLFVAVAIG). An NPA 1 motif is present at residues 84 to 86 (NPA). 3 consecutive transmembrane segments (helical) span residues 87–109 (VTFGLALGGQITILTGVFYWIAQ), 133–153 (LSGVGAFEGVVMEIIVTFGLV), and 168–188 (LGTIAPIAIGFIVGANILVAG). The NPA 2 motif lies at 196–198 (NPA). The helical transmembrane segment at 210 to 230 (YTNIWIYWVGPLVGGGLAGLV) threads the bilayer.

Belongs to the MIP/aquaporin (TC 1.A.8) family. TIP (TC 1.A.8.10) subfamily. In terms of tissue distribution, expressed in roots and leaves.

Its subcellular location is the vacuole membrane. Functionally, aquaporins facilitate the transport of water and small neutral solutes across cell membranes. May be involved in transport from the vacuolar compartment to the cytoplasm. This is Probable aquaporin TIP2-2 (TIP2-2) from Oryza sativa subsp. japonica (Rice).